The following is a 430-amino-acid chain: 3-phosphoshikimate 1-carboxyvinyltransferase (430 aa).

Positions 23, 24, and 28 each coordinate 3-phosphoshikimate. Lys-23 lines the phosphoenolpyruvate pocket. 2 residues coordinate phosphoenolpyruvate: Gly-93 and Arg-121. 3-phosphoshikimate contacts are provided by Ser-166, Gln-168, Asp-313, and Lys-340. Gln-168 contacts phosphoenolpyruvate. The Proton acceptor role is filled by Asp-313. 2 residues coordinate phosphoenolpyruvate: Arg-344 and Arg-386.

It belongs to the EPSP synthase family. In terms of assembly, monomer.

It is found in the cytoplasm. The catalysed reaction is 3-phosphoshikimate + phosphoenolpyruvate = 5-O-(1-carboxyvinyl)-3-phosphoshikimate + phosphate. Its pathway is metabolic intermediate biosynthesis; chorismate biosynthesis; chorismate from D-erythrose 4-phosphate and phosphoenolpyruvate: step 6/7. Catalyzes the transfer of the enolpyruvyl moiety of phosphoenolpyruvate (PEP) to the 5-hydroxyl of shikimate-3-phosphate (S3P) to produce enolpyruvyl shikimate-3-phosphate and inorganic phosphate. The protein is 3-phosphoshikimate 1-carboxyvinyltransferase of Anaeromyxobacter sp. (strain Fw109-5).